The primary structure comprises 529 residues: Potassium voltage-gated channel subfamily A member 6 (529 aa).

The tract at residues 1–33 (MRSEKSLTLAAPGEVRGPEGEQQDAGDFPEAGG) is disordered. Residues 1 to 171 (MRSEKSLTLA…LLFEYPESSG (171 aa)) lie on the Cytoplasmic side of the membrane. S3 is modified (phosphoserine). A helical membrane pass occupies residues 172-193 (PARGIAIVSVLVILISIVIFCL). Over 194 to 262 (ETLPQFRVDG…TLGGSFFTDP (69 aa)) the chain is Extracellular. Residues 210-220 (GVSRVSPVSRG) are compositionally biased toward low complexity. The disordered stretch occupies residues 210-233 (GVSRVSPVSRGSQEEEEDEDDSYT). A helical membrane pass occupies residues 263–284 (FFLVETLCIVWFTFELLVRFSA). A lipid anchor (S-palmitoyl cysteine) is attached at C285. Over 285–295 (CPSKPAFFRNI) the chain is Cytoplasmic. A helical membrane pass occupies residues 296–316 (MNIIDLVAIFPYFITLGTELV). Topologically, residues 317–337 (QQQEQQPASGGGGQNGQQAMS) are extracellular. A helical; Voltage-sensor membrane pass occupies residues 338-358 (LAILRVIRLVRVFRIFKLSRH). Topologically, residues 359–373 (SKGLQILGKTLQASM) are cytoplasmic. The segment at 360-373 (KGLQILGKTLQASM) is S4-S5 linker. The helical transmembrane segment at 374–395 (RELGLLIFFLFIGVILFSSAVY) threads the bilayer. The Extracellular segment spans residues 396–409 (FAEADDDDSLFPSI). Positions 410 to 421 (PDAFWWAVVTMT) form an intramembrane region, helical. A Selectivity filter motif is present at residues 422-427 (TVGYGD). An intramembrane segment occupies 422–429 (TVGYGDMY). Topologically, residues 430 to 436 (PMTVGGK) are extracellular. The chain crosses the membrane as a helical span at residues 437-465 (IVGSLCAIAGVLTIALPVPVIVSNFNYFY). Over 466-529 (HRETEQEEQG…YAEKRMLTEV (64 aa)) the chain is Cytoplasmic. The disordered stretch occupies residues 488 to 513 (DLRATDNGLGKPDFPEANRERRPSYL). Over residues 500-510 (DFPEANRERRP) the composition is skewed to basic and acidic residues. Position 511 is a phosphoserine; by PKA (S511). The PDZ-binding signature appears at 527 to 529 (TEV).

The protein belongs to the potassium channel family. A (Shaker) (TC 1.A.1.2) subfamily. Kv1.6/KCNA6 sub-subfamily. In terms of assembly, homotetramer and heterotetramer of potassium channel proteins. Interacts with KCNAB1 and KCNAB2.

It localises to the cell membrane. It carries out the reaction K(+)(in) = K(+)(out). In terms of biological role, voltage-gated potassium channel that mediates transmembrane potassium transport in excitable membranes. Forms tetrameric potassium-selective channels through which potassium ions pass in accordance with their electrochemical gradient. The channel alternates between opened and closed conformations in response to the voltage difference across the membrane. Can form functional homotetrameric channels and heterotetrameric channels that contain variable proportions of KCNA1, KCNA2, KCNA4, KCNA6, and possibly other family members as well; channel properties depend on the type of alpha subunits that are part of the channel. Channel properties are modulated by cytoplasmic beta subunits that regulate the subcellular location of the alpha subunits and promote rapid inactivation. Homotetrameric channels display rapid activation and slow inactivation. This is Potassium voltage-gated channel subfamily A member 6 (KCNA6) from Homo sapiens (Human).